We begin with the raw amino-acid sequence, 491 residues long: Monocarboxylate transport permease protein (491 aa).

Transmembrane regions (helical) follow at residues 7–27 (GTALAVFIFFFVLVTVMGFVA), 55–75 (WFLVGGDFYTAYTVIAVPALV), 83–103 (FFALPYTIVVYPFVFMVMPVL), 130–150 (LAVAATGVIATMPYIALQLVG), 157–177 (ALGLHGELPLAIAFIVLALYT), 187–207 (LIAFVKDIMIYIVVIAAVALI), 246–266 (LALGSALAAFMYPHTLTGIFA), 277–297 (AIMLPAYTLLLGLLALLGYMG), 322–342 (WFSGFAFAAIAIGALVPAAVM), 374–396 (ITSLVVKVGALLVIIFLPTQFAL), 400–422 (LLGGIWILQTLPALVFGLYTNWF), 427–447 (LLAGWFVGFGGGTFLVWDAGW), and 465–485 (GLLALAANIAVAVVVNALLPA).

Belongs to the sodium:solute symporter (SSF) (TC 2.A.21) family.

It localises to the cell membrane. With respect to regulation, inhibited by CCCP, but is apparently not affected by the concentration of sodium. Functionally, low-affinity transporter of alanine and high-affinity transporter of lactate and pyruvate. Can also transport other monocarboxylates such as propionate, butyrate, alpha-hydroxybutyrate or acetate. May be proton coupled. Required for optimal growth on alanine or pyruvate and ammonia. The polypeptide is Monocarboxylate transport permease protein (Rhizobium johnstonii (strain DSM 114642 / LMG 32736 / 3841) (Rhizobium leguminosarum bv. viciae)).